Reading from the N-terminus, the 431-residue chain is Histidinol dehydrogenase (431 aa).

Residues Y127, Q185, and N208 each coordinate NAD(+). Residues S234, Q256, and H259 each contribute to the substrate site. Zn(2+) contacts are provided by Q256 and H259. Residues E323 and H324 each act as proton acceptor in the active site. The substrate site is built by H324, D357, E411, and H416. D357 is a binding site for Zn(2+). A Zn(2+)-binding site is contributed by H416.

This sequence belongs to the histidinol dehydrogenase family. The cofactor is Zn(2+).

The catalysed reaction is L-histidinol + 2 NAD(+) + H2O = L-histidine + 2 NADH + 3 H(+). It participates in amino-acid biosynthesis; L-histidine biosynthesis; L-histidine from 5-phospho-alpha-D-ribose 1-diphosphate: step 9/9. In terms of biological role, catalyzes the sequential NAD-dependent oxidations of L-histidinol to L-histidinaldehyde and then to L-histidine. This is Histidinol dehydrogenase from Vibrio vulnificus (strain YJ016).